An 81-amino-acid chain; its full sequence is Short neurotoxin 1 (81 aa).

The N-terminal stretch at Met-1 to Thr-21 is a signal peptide. Cystine bridges form between Cys-24/Cys-43, Cys-38/Cys-60, Cys-62/Cys-73, and Cys-74/Cys-79.

It belongs to the three-finger toxin family. Short-chain subfamily. Type I alpha-neurotoxin sub-subfamily. Expressed by the venom gland.

It is found in the secreted. Functionally, binds to muscle nicotinic acetylcholine receptor (nAChR) and inhibit acetylcholine from binding to the receptor, thereby impairing neuromuscular transmission. The protein is Short neurotoxin 1 of Austrelaps superbus (Lowland copperhead snake).